A 217-amino-acid chain; its full sequence is Peroxiredoxin (217 aa).

Residues 2 to 159 enclose the Thioredoxin domain; sequence VVIGEKFPEV…VVRLVKALQT (158 aa). The active-site Cysteine sulfenic acid (-SOH) intermediate is the Cys-46. Arg-122 lines the substrate pocket.

This sequence belongs to the peroxiredoxin family. Prx6 subfamily. In terms of assembly, homodecamer. Pentamer of dimers that assemble into a ring structure.

Its subcellular location is the cytoplasm. It catalyses the reaction a hydroperoxide + [thioredoxin]-dithiol = an alcohol + [thioredoxin]-disulfide + H2O. In terms of biological role, thiol-specific peroxidase that catalyzes the reduction of hydrogen peroxide and organic hydroperoxides to water and alcohols, respectively. Plays a role in cell protection against oxidative stress by detoxifying peroxides. The chain is Peroxiredoxin from Methanococcus maripaludis (strain C5 / ATCC BAA-1333).